The sequence spans 399 residues: Acetate kinase (399 aa).

Asn9 provides a ligand contact to Mg(2+). Position 16 (Lys16) interacts with ATP. Arg90 provides a ligand contact to substrate. Catalysis depends on Asp147, which acts as the Proton donor/acceptor. ATP is bound by residues 207-211 (HIGNG), 282-284 (DLR), and 330-334 (GVGEN). Glu384 contacts Mg(2+).

This sequence belongs to the acetokinase family. As to quaternary structure, homodimer. Requires Mg(2+) as cofactor. It depends on Mn(2+) as a cofactor.

It localises to the cytoplasm. It carries out the reaction acetate + ATP = acetyl phosphate + ADP. It participates in metabolic intermediate biosynthesis; acetyl-CoA biosynthesis; acetyl-CoA from acetate: step 1/2. Catalyzes the formation of acetyl phosphate from acetate and ATP. Can also catalyze the reverse reaction. The sequence is that of Acetate kinase from Staphylococcus saprophyticus subsp. saprophyticus (strain ATCC 15305 / DSM 20229 / NCIMB 8711 / NCTC 7292 / S-41).